Consider the following 476-residue polypeptide: Glycogen synthase (476 aa).

Lys-15 serves as a coordination point for ADP-alpha-D-glucose.

This sequence belongs to the glycosyltransferase 1 family. Bacterial/plant glycogen synthase subfamily.

It catalyses the reaction [(1-&gt;4)-alpha-D-glucosyl](n) + ADP-alpha-D-glucose = [(1-&gt;4)-alpha-D-glucosyl](n+1) + ADP + H(+). Its pathway is glycan biosynthesis; glycogen biosynthesis. In terms of biological role, synthesizes alpha-1,4-glucan chains using ADP-glucose. The chain is Glycogen synthase from Haemophilus influenzae (strain PittGG).